The chain runs to 98 residues: uncharacterized protein (98 aa).

Positions 1 to 63 (MPRDKKLVHR…NGHSQPAIVA (63 aa)) are disordered. Acidic residues predominate over residues 14–29 (DVEDEDNDQREEEWSD). The span at 48–57 (EPSSASNGHS) shows a compositional bias: polar residues.

This is an uncharacterized protein from Aedes vexans (Inland floodwater mosquito).